Reading from the N-terminus, the 93-residue chain is Small ribosomal subunit protein uS19 (93 aa).

The protein belongs to the universal ribosomal protein uS19 family.

Protein S19 forms a complex with S13 that binds strongly to the 16S ribosomal RNA. The polypeptide is Small ribosomal subunit protein uS19 (Parafrankia sp. (strain EAN1pec)).